A 132-amino-acid chain; its full sequence is MDSRTGESITVAQAENSVFIWEVPNPLYFRIQRVEDPLYTRTRIYHIQVRFNHNLRKALDLRKAYFNFQVWTTSMRASGPTYLSRFKCLVMSHLDNLGVIGINHVIRAVRFATDRSYVTHVHENHVINFKIY.

Belongs to the geminiviridae replication enhancer protein family. Homooligomer. Interacts with the replication-associated protein (REP). Interacts with host proliferating cell nuclear antigen (PCNA). Interacts with host retinoblastoma-related protein 1 (RBR1), and may thereby deregulate the host cell cycle. Oligomerization and interaction with PCNA are necessary for optimal replication enhancement.

In terms of biological role, increases viral DNA accumulation. Enhances infectivity and symptom expression. The protein is Replication enhancer protein of Cabbage leaf curl virus (isolate Jamaica) (CaLCuV).